The following is a 290-amino-acid chain: ATP synthase gamma chain (290 aa).

Belongs to the ATPase gamma chain family. In terms of assembly, F-type ATPases have 2 components, CF(1) - the catalytic core - and CF(0) - the membrane proton channel. CF(1) has five subunits: alpha(3), beta(3), gamma(1), delta(1), epsilon(1). CF(0) has three main subunits: a, b and c.

The protein localises to the cell inner membrane. Functionally, produces ATP from ADP in the presence of a proton gradient across the membrane. The gamma chain is believed to be important in regulating ATPase activity and the flow of protons through the CF(0) complex. The polypeptide is ATP synthase gamma chain (Amoebophilus asiaticus (strain 5a2)).